A 460-amino-acid polypeptide reads, in one-letter code: Sorting nexin-4 (460 aa).

The span at 1–16 shows a compositional bias: polar residues; the sequence is MTATEQQQDDFSNVSW. Residues 1 to 53 form a disordered region; that stretch reads MTATEQQQDDFSNVSWSEHVHDQQTRSVPDAEEPGHDMNAPGTGLERDAPSLG. The PX domain maps to 56 to 178; it reads KLECTVDTPI…TFLESPDWNA (123 aa). Coiled coils occupy residues 238-266, 306-337, and 374-403; these read EKVI…QKLI, RDMQ…EYLN, and QARR…TSDM.

This sequence belongs to the sorting nexin family. In terms of assembly, forms a complex with ATG20 and ATG17.

It is found in the cytoplasm. Its subcellular location is the membrane. The protein localises to the endosome membrane. In terms of biological role, sorting nexin involved in the separation or division of vacuoles throughout the entire life cycle of the cells. Involved in retrieval of late-Golgi SNAREs from post-Golgi endosomes to the trans-Golgi network, for cytoplasm to vacuole transport (Cvt), and autophagy of large cargos including mitophagy, pexophagy and glycophagy. Autophagy is required for proper vegetative growth, asexual/sexual reproduction, and full virulence. Autophagy is particularly involved in the biosynthesis of deoxynivalenol (DON), an important virulence determinant. This is Sorting nexin-4 from Gibberella zeae (strain ATCC MYA-4620 / CBS 123657 / FGSC 9075 / NRRL 31084 / PH-1) (Wheat head blight fungus).